Here is a 246-residue protein sequence, read N- to C-terminus: Proteasome subunit alpha (246 aa).

This sequence belongs to the peptidase T1A family. The 20S proteasome core is composed of 14 alpha and 14 beta subunits that assemble into four stacked heptameric rings, resulting in a barrel-shaped structure. The two inner rings, each composed of seven catalytic beta subunits, are sandwiched by two outer rings, each composed of seven alpha subunits. The catalytic chamber with the active sites is on the inside of the barrel. Has probably a gated structure, the ends of the cylinder being occluded by the N-termini of the alpha-subunits. Is likely capped at one or both ends by the proteasome regulatory ATPase, PAN.

The protein localises to the cytoplasm. The formation of the proteasomal ATPase PAN-20S proteasome complex, via the docking of the C-termini of PAN into the intersubunit pockets in the alpha-rings, triggers opening of the gate for substrate entry. Interconversion between the open-gate and close-gate conformations leads to a dynamic regulation of the 20S proteasome proteolysis activity. Component of the proteasome core, a large protease complex with broad specificity involved in protein degradation. In Archaeoglobus fulgidus (strain ATCC 49558 / DSM 4304 / JCM 9628 / NBRC 100126 / VC-16), this protein is Proteasome subunit alpha.